Here is a 235-residue protein sequence, read N- to C-terminus: 2-C-methyl-D-erythritol 4-phosphate cytidylyltransferase (235 aa).

It belongs to the IspD/TarI cytidylyltransferase family. IspD subfamily.

The enzyme catalyses 2-C-methyl-D-erythritol 4-phosphate + CTP + H(+) = 4-CDP-2-C-methyl-D-erythritol + diphosphate. The protein operates within isoprenoid biosynthesis; isopentenyl diphosphate biosynthesis via DXP pathway; isopentenyl diphosphate from 1-deoxy-D-xylulose 5-phosphate: step 2/6. Functionally, catalyzes the formation of 4-diphosphocytidyl-2-C-methyl-D-erythritol from CTP and 2-C-methyl-D-erythritol 4-phosphate (MEP). This is 2-C-methyl-D-erythritol 4-phosphate cytidylyltransferase from Pseudomonas entomophila (strain L48).